The primary structure comprises 103 residues: Alpha-ketoglutarate dehydrogenase component 4 (103 aa).

M1 carries the post-translational modification N-acetylmethionine. K5 carries the post-translational modification N6-succinyllysine. The segment at 23–70 (IRFPDRRDNPKPNVSEVLRSAGLPSHTSSISQHSKGSKSPDWLMHQGP) is disordered. Low complexity predominate over residues 47–61 (SHTSSISQHSKGSKS). Phosphoserine occurs at positions 61 and 90.

The protein belongs to the alpha-ketoglutarate dehydrogenase component 4 family. Component of the 2-oxoglutarate dehydrogenase complex (OGDHC), composed of OGDH (2-oxoglutarate dehydrogenase; also called E1 subunit), DLST (dihydrolipoamide succinyltransferase; also called E2 subunit) and DLD (dihydrolipoamide dehydrogenase; also called E3 subunit), and the assembly factor KGD4. Within OGDHC complex, interacts (via N-terminus) with E3 subunit and (via C-terminus) with E2 subunit.

The protein localises to the mitochondrion. Functionally, molecular adapter that is necessary to form a stable 2-oxoglutarate dehydrogenase enzyme complex (OGDHC). Enables the specific recruitment of E3 subunit to E2 subunit in the 2-oxoglutarate dehydrogenase complex (OGDHC). The chain is Alpha-ketoglutarate dehydrogenase component 4 (KGD4) from Bos taurus (Bovine).